Consider the following 1975-residue polypeptide: Golgi-specific brefeldin A-resistance guanine nucleotide exchange factor 1 homolog (1975 aa).

2 disordered regions span residues 216–243 (NPTE…EPEN) and 299–352 (ISAG…EEKM). The span at 221–230 (RQKRKKKRQL) shows a compositional bias: basic residues. In terms of domain architecture, SEC7 spans 624-812 (QIIEQKKRKR…ADMYQAIKTE (189 aa)). Over residues 1264 to 1277 (QSLRVGGDQQQQRM) the composition is skewed to polar residues. Disordered regions lie at residues 1264 to 1318 (QSLR…DLES), 1447 to 1473 (DEKA…VTED), 1699 to 1751 (IKDT…ATAQ), 1788 to 1854 (VHSG…QYAY), and 1877 to 1975 (YANQ…QEKP). A compositionally biased stretch (basic and acidic residues) spans 1291-1309 (GAHEERAYTSEGEERRRGG). Residues 1451–1464 (VKKHHHHHHGHKKK) are compositionally biased toward basic residues. The span at 1734–1751 (SNSTAATSTSDPSIATAQ) shows a compositional bias: low complexity. A compositionally biased stretch (pro residues) spans 1797 to 1808 (GSPPQTEPPASS). Composition is skewed to low complexity over residues 1820-1854 (YEQY…QYAY) and 1877-1894 (YANQ…QQQH). Polar residues predominate over residues 1895 to 1909 (PVNPTSPSVHGQYSV). Residues 1938–1957 (TPPQNNAPALAPSAPTTTSA) are compositionally biased toward low complexity.

It localises to the golgi apparatus. It is found in the cis-Golgi network. The protein localises to the endoplasmic reticulum-Golgi intermediate compartment. Guanine-nucleotide exchange factor (GEF) for members of the Arf family of small GTPases involved in trafficking in the early secretory pathway; its GEF activity initiates the coating of nascent vesicles via the localized generation of activated ARFs through replacement of GDP with GTP. Also, plays a role in receptor-mediated endocytosis in oocytes and endosomal trafficking. Involved in vesicle retrograde transport from the ERGIC and cis-Golgi compartments to the endoplasmic reticulum (ER). Plays a role in maintaining mitochondrial morphology, network organization and function. May be required for the basolateral cell membrane localization of the serine threonine protein kinase sgk-1 in intestinal cells. The chain is Golgi-specific brefeldin A-resistance guanine nucleotide exchange factor 1 homolog from Caenorhabditis elegans.